Here is a 492-residue protein sequence, read N- to C-terminus: NAD(P)H-quinone oxidoreductase subunit 2 A, chloroplastic (492 aa).

13 helical membrane-spanning segments follow: residues 6 to 26 (LLLF…GLIL), 39 to 59 (ISWF…ALLF), 81 to 101 (IFQF…VEYI), 106 to 126 (MAIT…MFLC), 131 to 151 (LITI…LSGY), 165 to 185 (YLLM…WLYG), 209 to 229 (PGIL…LSPA), 277 to 297 (WHLL…LIAI), 305 to 325 (MLAY…IVGD), 336 to 356 (YMLF…SFGL), 377 to 397 (ALSL…AGFF), 400 to 420 (LHLF…IGLL), and 464 to 484 (FSMI…NPII).

Belongs to the complex I subunit 2 family. NDH is composed of at least 16 different subunits, 5 of which are encoded in the nucleus.

It localises to the plastid. The protein resides in the chloroplast thylakoid membrane. The enzyme catalyses a plastoquinone + NADH + (n+1) H(+)(in) = a plastoquinol + NAD(+) + n H(+)(out). The catalysed reaction is a plastoquinone + NADPH + (n+1) H(+)(in) = a plastoquinol + NADP(+) + n H(+)(out). Its function is as follows. NDH shuttles electrons from NAD(P)H:plastoquinone, via FMN and iron-sulfur (Fe-S) centers, to quinones in the photosynthetic chain and possibly in a chloroplast respiratory chain. The immediate electron acceptor for the enzyme in this species is believed to be plastoquinone. Couples the redox reaction to proton translocation, and thus conserves the redox energy in a proton gradient. This Phaseolus vulgaris (Kidney bean) protein is NAD(P)H-quinone oxidoreductase subunit 2 A, chloroplastic.